Reading from the N-terminus, the 999-residue chain is Testis anion transporter 1 (999 aa).

The Cytoplasmic portion of the chain corresponds to 1–93 (MQTERSLQSF…YRFKDWLLGD (93 aa)). Residues 94–114 (LLAGLSVGLVQVPQGLILSLL) traverse the membrane as a helical segment. The Extracellular portion of the chain corresponds to 115–117 (TRQ). A helical transmembrane segment spans residues 118–138 (LIPPLNVTYAAFCSSVIYVIF). Residue G139 is a topological domain, cytoplasmic. The helical transmembrane segment at 140–160 (SCHQMSIGPFFLVSALMINVL) threads the bilayer. Residues 161–200 (KDRPFNNGHLILGTFVKDDFSVPTFYLSYNRSLSMVASTT) lie on the Extracellular side of the membrane. Residue N190 is glycosylated (N-linked (GlcNAc...) asparagine). Residues 201–221 (FLTGIIQLSMGMLGMGFMATY) form a helical membrane-spanning segment. The Cytoplasmic portion of the chain corresponds to 222-230 (LPEAATSAY). A helical transmembrane segment spans residues 231–251 (LAAVALHIILAQMTCILGIMV). At 252–268 (SFHAGPISFIYNIINYC) the chain is on the extracellular side. Residues 269-289 (IALPKANSTSILLFITSVVAL) form a helical membrane-spanning segment. Topologically, residues 290 to 305 (RINKCIRITFNRYPIE) are cytoplasmic. Residues 306–326 (FPMELLLILGFSLLTSKITMA) traverse the membrane as a helical segment. Topologically, residues 327 to 354 (TENSKMLMNMIPYSFVFPENPEFGILSR) are extracellular. The helical transmembrane segment at 355–375 (VVLQALSLSFVSSFLLISLGK) threads the bilayer. Residues 376 to 390 (KIANFHNYRTNSNQD) are Cytoplasmic-facing. The helical transmembrane segment at 391–411 (LIAIGLCNLLSSFFKCCVFTG) threads the bilayer. The Extracellular portion of the chain corresponds to 412–427 (SLSRTTIQDKSGGRQQ). The chain crosses the membrane as a helical span at residues 428 to 448 (FASLVGAGVMLLLMVKMESFF). Topologically, residues 449–453 (HNLPN) are cytoplasmic. Residues 454 to 474 (AVLAGIILSNVVPYLEAIYNL) traverse the membrane as a helical segment. At 475–494 (PSLWRQDQYECIIWMVTFSS) the chain is on the extracellular side. A helical transmembrane segment spans residues 495-515 (AILLGLDVGLLISLAFTFFVI). The Cytoplasmic portion of the chain corresponds to 516–544 (TIRSHRTKILVLGQIPNTNIYRNVNDYRE). The STAS domain maps to 541 to 796 (DYREVILIPG…LSLHDAVLFA (256 aa)). A helical membrane pass occupies residues 545–565 (VILIPGVKIFQCCSSITFVNV). The Extracellular portion of the chain corresponds to 566–999 (YHLKQKVLKE…RKPHNYPNSP (434 aa)). Residues 661–999 (TVSSTSQRNI…RKPHNYPNSP (339 aa)) are interaction with RACGAP1. Disordered regions lie at residues 678-701 (EKAW…SESL) and 893-999 (SELD…PNSP). The span at 684-696 (NSPPRNSPLPPPE) shows a compositional bias: pro residues. Acidic residues-rich tracts occupy residues 893-903 (SELDPGSELDS) and 912-947 (ELES…EPEP). A compositionally biased stretch (polar residues) spans 973–982 (GSSNSQSRAP).

This sequence belongs to the SLC26A/SulP transporter (TC 2.A.53) family. Interacts with RACGAP1. Interacts with CFTR; stimulates anion transport activity of CFTR. N-glycosylated. As to expression, expressed in testis and epididymis. Located at the end of the midpiece of the flagella, known as the annulus, in spermatozoa.

The protein resides in the membrane. The catalysed reaction is sulfate(out) + chloride(in) = sulfate(in) + chloride(out). It catalyses the reaction oxalate(in) + chloride(out) = oxalate(out) + chloride(in). Functionally, antiporter that mediates the exchange of sulfate and oxalate against chloride ions across a membrane. Stimulates anion transport activity of CFTR. May cooperate with CFTR in the regulation of chloride and bicarbonate ions fluxes required for activation of the ADCY10/PKA pathway during sperm motility and sperm capacitation. May play a role in sperm tail differentiation and motility and hence male fertility. In Mus musculus (Mouse), this protein is Testis anion transporter 1.